The sequence spans 262 residues: Acyl-coenzyme A diphosphatase FITM2 (262 aa).

Over Met1 to Tyr23 the chain is Cytoplasmic. The helical transmembrane segment at Leu24–Leu44 threads the bilayer. The Lumenal segment spans residues Pro45–Asn57. The helical transmembrane segment at Val58–Leu78 threads the bilayer. The Cytoplasmic portion of the chain corresponds to Thr79–Arg93. The chain crosses the membrane as a helical span at residues Leu94–Ile114. Topologically, residues Glu115–Gly145 are lumenal. A helical membrane pass occupies residues Phe146–Ile166. Residue His155 is part of the active site. The Cytoplasmic portion of the chain corresponds to Val167–Thr190. Residues Leu191–Val211 form a helical membrane-spanning segment. The Lumenal segment spans residues Tyr212–Gln218. His214 is an active-site residue. Residues Lys219–Leu239 form a helical membrane-spanning segment. At Lys240–Lys262 the chain is on the cytoplasmic side.

It belongs to the FIT family. FIT2 subfamily.

Its subcellular location is the endoplasmic reticulum membrane. The catalysed reaction is an acyl-CoA + H2O = an acyl-4'-phosphopantetheine + adenosine 3',5'-bisphosphate + 2 H(+). It carries out the reaction (9Z)-octadecenoyl-CoA + H2O = S-(9Z-octadecenoyl)-4'-phosphopantetheine + adenosine 3',5'-bisphosphate + 2 H(+). It catalyses the reaction (5Z,8Z,11Z,14Z)-eicosatetraenoyl-CoA + H2O = S-(5Z,8Z,11Z,14Z-eicosatetraenoyl)-4'-phosphopantetheine + adenosine 3',5'-bisphosphate + 2 H(+). The enzyme catalyses hexadecanoyl-CoA + H2O = S-hexadecanoyl-4'-phosphopantetheine + adenosine 3',5'-bisphosphate + 2 H(+). Its function is as follows. Fatty acyl-coenzyme A (CoA) diphosphatase that hydrolyzes fatty acyl-CoA to yield acyl-4'-phosphopantetheine and adenosine 3',5'-bisphosphate. Preferentially hydrolyzes unsaturated long-chain acyl-CoA substrates such as oleoyl-CoA/(9Z)-octadecenoyl-CoA and arachidonoyl-CoA/(5Z,8Z,11Z,14Z)-eicosatetraenoyl-CoA in the endoplasmic reticulum (ER) lumen. This catalytic activity is required for maintaining ER structure and for lipid droplets (LDs) biogenesis, which are lipid storage organelles involved in maintaining lipid and energy homeostasis. Directly binds to diacylglycerol (DAGs) and triacylglycerol, which is also important for LD biogenesis. May support directional budding of nacent LDs from the ER into the cytosol by reducing DAG levels at sites of LD formation. Plays a role in the regulation of cell morphology and cytoskeletal organization. This Bos taurus (Bovine) protein is Acyl-coenzyme A diphosphatase FITM2.